We begin with the raw amino-acid sequence, 172 residues long: uncharacterized protein (172 aa).

Helical transmembrane passes span 20–40 (LVLI…EYIF), 48–68 (CVYE…ALII), 76–96 (LILI…HSFV), and 146–166 (MTEY…LILF).

It is found in the cell membrane. This is an uncharacterized protein from Rickettsia prowazekii (strain Madrid E).